The sequence spans 156 residues: Single-stranded DNA-binding protein 1 (156 aa).

Residues Met-1–Leu-107 enclose the SSB domain. The segment covering Phe-114 to Thr-124 has biased composition (low complexity). Residues Phe-114 to Gly-156 are disordered.

Homotetramer.

This Streptomyces coelicolor (strain ATCC BAA-471 / A3(2) / M145) protein is Single-stranded DNA-binding protein 1 (ssb1).